A 154-amino-acid polypeptide reads, in one-letter code: Protein X (154 aa).

The mitochondrial targeting sequence stretch occupies residues 68 to 117 (PCALRFTSARRMETTVNAHQILPKVLHKRTLGLSAMSTTDLEAYFKDCLF).

This sequence belongs to the orthohepadnavirus protein X family. In terms of assembly, may form homodimer. May interact with host CEBPA, CFLAR, CREB1, DDB1, E4F1, HBXIP, HSPD1/HSP60, NFKBIA, POLR2E and SMAD4. Interacts with host SMC5-SMC6 complex and induces its degradation. Interacts with host TRPC4AP; leading to prevent ubiquitination of TRPC4AP. Interacts with host PLSCR1; this interaction promotes ubiquitination and degradation of HBx and impairs HBx-mediated cell proliferation. Post-translationally, a fraction may be phosphorylated in insect cells and HepG2 cells, a human hepatoblastoma cell line. Phosphorylated in vitro by host protein kinase C or mitogen-activated protein kinase. N-acetylated in insect cells.

The protein localises to the host cytoplasm. Its subcellular location is the host nucleus. The protein resides in the host mitochondrion. Functionally, multifunctional protein that plays a role in silencing host antiviral defenses and promoting viral transcription. Does not seem to be essential for HBV infection. May be directly involved in development of cirrhosis and liver cancer (hepatocellular carcinoma). Most of cytosolic activities involve modulation of cytosolic calcium. The effect on apoptosis is controversial depending on the cell types in which the studies have been conducted. May induce apoptosis by localizing in mitochondria and causing loss of mitochondrial membrane potential. May also modulate apoptosis by binding host CFLAR, a key regulator of the death-inducing signaling complex (DISC). Promotes viral transcription by using the host E3 ubiquitin ligase DDB1 to target the SMC5-SMC6 complex to proteasomal degradation. This host complex would otherwise bind to viral episomal DNA, and prevents its transcription. Moderately stimulates transcription of many different viral and cellular transcription elements. Promoters and enhancers stimulated by HBx contain DNA binding sites for NF-kappa-B, AP-1, AP-2, c-EBP, ATF/CREB, or the calcium-activated factor NF-AT. The polypeptide is Protein X (Hepatitis B virus genotype E (isolate Cote d'Ivoire/ABI-212/2003) (HBV-E)).